We begin with the raw amino-acid sequence, 642 residues long: MSDIITVTLPDGSQKQTARGTTIADFVRESIGPGLAKAALFARVNGQDMDLARKLDEDVKLQIFTPKSPESLELIRHDAAHVVASAVQKLFPGTQVTIGPATEEGFYYDFFREKPFTPEDLEKIEAEANAELKRDMAFVRTEISMDEAVRLFEEKGEKFKVEIVKDIAAKGAKTLTLYTHGDWVDFCLGPHAPSTGKIGIIKILSSSGAYWRGDHRNPMLQRVYGTAFFDKKQLAEYLTRIEESKKRDHRKLGKELDLFHFHPYSPGSAFWTPKGTTLYTTLSNWMRQLTQNDGYVEIKTPLMFNKGLWETSGHWGKYKENMFLVLDSESGEHDFSLKPMNCPSHHLFYGFKKHSYRDLPLRYHTQDVLHRNEAAGSLGGLTRVRQFAQDDAHIYCTEAQITDEVRRFVKLLDHVYKAVGLTYAVKLSTRPEQRLGDDSLWDRAEGGLKAALESLGLEYELAPGDGAFYGPKIDFAVSDSIGRRWQLGTMQLDYLAPERFDLTYVGEDNAEHRPVVLHRAIFGSFERFTAILIEHFAGAFPAWLAPIQAVLVTVADRQNDYARKVRDSLRAKGYRVEFDERGLSMNAKIREAQLQKVPFTLVVGDNEVSGEGVSPRRYGGEDLKTMKVTDFEALLAKEAALP.

The region spanning 1 to 65 (MSDIITVTLP…DEDVKLQIFT (65 aa)) is the TGS domain. A catalytic region spans residues 248–541 (DHRKLGKELD…LIEHFAGAFP (294 aa)). Residues C342, H393, and H518 each contribute to the Zn(2+) site.

Belongs to the class-II aminoacyl-tRNA synthetase family. As to quaternary structure, homodimer. It depends on Zn(2+) as a cofactor.

The protein resides in the cytoplasm. It catalyses the reaction tRNA(Thr) + L-threonine + ATP = L-threonyl-tRNA(Thr) + AMP + diphosphate + H(+). Its function is as follows. Catalyzes the attachment of threonine to tRNA(Thr) in a two-step reaction: L-threonine is first activated by ATP to form Thr-AMP and then transferred to the acceptor end of tRNA(Thr). Also edits incorrectly charged L-seryl-tRNA(Thr). The chain is Threonine--tRNA ligase from Myxococcus xanthus (strain DK1622).